Here is a 1264-residue protein sequence, read N- to C-terminus: Valine--tRNA ligase (1264 aa).

Position 2 is an N-acetylserine (S2). Residues 89-219 (GSRAAVLVQQ…YSGARSVTQQ (131 aa)) form the GST C-terminal domain. Positions 218 to 230 (QQPGSEITAPQKT) are enriched in polar residues. Positions 218-296 (QQPGSEITAP…GEKKDVSGTM (79 aa)) are disordered. 2 stretches are compositionally biased toward basic and acidic residues: residues 234–248 (LKKE…EKFQ) and 260–275 (HGEK…KRDP). Positions 344–354 (PNVTGSLHLGH) match the 'HIGH' region motif. Residues S437 and S527 each carry the phosphoserine modification. K645 is subject to N6-acetyllysine. Residues 862–866 (KMSKS) carry the 'KMSKS' region motif. K865 serves as a coordination point for ATP.

Belongs to the class-I aminoacyl-tRNA synthetase family. As to quaternary structure, forms high-molecular-mass aggregates with elongation factor 1.

It carries out the reaction tRNA(Val) + L-valine + ATP = L-valyl-tRNA(Val) + AMP + diphosphate. Its activity is regulated as follows. Can be regulated by protein kinase C-dependent phosphorylation. This chain is Valine--tRNA ligase (Vars1), found in Rattus norvegicus (Rat).